The sequence spans 186 residues: Ribosome-recycling factor (186 aa).

Belongs to the RRF family.

It is found in the cytoplasm. Functionally, responsible for the release of ribosomes from messenger RNA at the termination of protein biosynthesis. May increase the efficiency of translation by recycling ribosomes from one round of translation to another. In Janthinobacterium sp. (strain Marseille) (Minibacterium massiliensis), this protein is Ribosome-recycling factor.